The chain runs to 508 residues: U4/U6 small nuclear ribonucleoprotein Prp31 (508 aa).

Residues 1 to 45 (MSLADELLADLEEAGEEDGLYPGGEEGESDGEPGERQVDGGLEDI) are disordered. Acidic residues predominate over residues 7–32 (LLADLEEAGEEDGLYPGGEEGESDGE). 2 coiled-coil regions span residues 96–131 (EADP…KYSK) and 192–226 (DDEL…MSFI). Residues 226-344 (IAPNLSIIVG…IERKFDKWQE (119 aa)) form the Nop domain. Disordered stretches follow at residues 345 to 368 (PPPV…RGGR) and 442 to 461 (QSMT…GTSS). Residues 362 to 375 (RKKRGGRRYRKMKE) carry the Nuclear localization signal (NLS) motif.

It belongs to the PRP31 family. Identified in the spliceosome B complex. Component of the U4/U6-U5 tri-snRNP complex. Component of some MLL1/MLL complex.

Its subcellular location is the nucleus. It localises to the nucleus speckle. The protein localises to the cajal body. Involved in pre-mRNA splicing as component of the spliceosome. Required for the assembly of the U4/U5/U6 tri-snRNP complex, one of the building blocks of the spliceosome. The protein is U4/U6 small nuclear ribonucleoprotein Prp31 (prpf31) of Danio rerio (Zebrafish).